The sequence spans 111 residues: WAP four-disulfide core domain protein 12 (111 aa).

The signal sequence occupies residues 1–23 (MGSSSFLVLMVSLVLVTLVAVEG). Residues 27–74 (GIEKAGVCPADNVRCFKSDPPQCHTDQDCLGERKCCYLHCGFKCVIPV) enclose the WAP domain. 4 cysteine pairs are disulfide-bonded: cysteine 34–cysteine 62, cysteine 41–cysteine 66, cysteine 49–cysteine 61, and cysteine 55–cysteine 70. The interval 80–111 (GGNKDEDVSRPYPEPGWEAKCPGSSSTRCPQK) is disordered. The segment covering 102-111 (GSSSTRCPQK) has biased composition (polar residues).

As to expression, highly expressed in prostate, skin, lung and esophagus. Weakly expressed in skeletal muscle, epididymis, kidney, trachea, salivary gland, testis and seminal vesicle.

The protein localises to the secreted. Its function is as follows. Antibacterial protein. Putative acid-stable proteinase inhibitor. The chain is WAP four-disulfide core domain protein 12 (WFDC12) from Homo sapiens (Human).